A 408-amino-acid polypeptide reads, in one-letter code: LL-diaminopimelate aminotransferase (408 aa).

Residues Tyr15 and Gly42 each coordinate substrate. Pyridoxal 5'-phosphate is bound by residues Tyr72, 108–109 (SK), Tyr132, Asn187, Tyr218, and 246–248 (SFS). Residues Lys109, Tyr132, and Asn187 each contribute to the substrate site. Lys249 is subject to N6-(pyridoxal phosphate)lysine. Arg257 and Asn292 together coordinate pyridoxal 5'-phosphate. Substrate is bound by residues Asn292 and Arg388.

This sequence belongs to the class-I pyridoxal-phosphate-dependent aminotransferase family. LL-diaminopimelate aminotransferase subfamily. In terms of assembly, homodimer. Pyridoxal 5'-phosphate is required as a cofactor.

It carries out the reaction (2S,6S)-2,6-diaminopimelate + 2-oxoglutarate = (S)-2,3,4,5-tetrahydrodipicolinate + L-glutamate + H2O + H(+). The protein operates within amino-acid biosynthesis; L-lysine biosynthesis via DAP pathway; LL-2,6-diaminopimelate from (S)-tetrahydrodipicolinate (aminotransferase route): step 1/1. Functionally, involved in the synthesis of meso-diaminopimelate (m-DAP or DL-DAP), required for both lysine and peptidoglycan biosynthesis. Catalyzes the direct conversion of tetrahydrodipicolinate to LL-diaminopimelate. This Prochlorococcus marinus (strain MIT 9303) protein is LL-diaminopimelate aminotransferase.